We begin with the raw amino-acid sequence, 330 residues long: Phenylalanine--tRNA ligase alpha subunit (330 aa).

A Mg(2+)-binding site is contributed by Glu-246.

The protein belongs to the class-II aminoacyl-tRNA synthetase family. Phe-tRNA synthetase alpha subunit type 1 subfamily. As to quaternary structure, tetramer of two alpha and two beta subunits. The cofactor is Mg(2+).

Its subcellular location is the cytoplasm. The catalysed reaction is tRNA(Phe) + L-phenylalanine + ATP = L-phenylalanyl-tRNA(Phe) + AMP + diphosphate + H(+). The chain is Phenylalanine--tRNA ligase alpha subunit from Wolinella succinogenes (strain ATCC 29543 / DSM 1740 / CCUG 13145 / JCM 31913 / LMG 7466 / NCTC 11488 / FDC 602W) (Vibrio succinogenes).